The sequence spans 487 residues: Berbamunine synthase (487 aa).

Residue C429 coordinates heme.

It belongs to the cytochrome P450 family. Heme is required as a cofactor.

The protein localises to the endoplasmic reticulum membrane. Its subcellular location is the microsome membrane. The catalysed reaction is (R)-N-methylcoclaurine + (S)-N-methylcoclaurine + reduced [NADPH--hemoprotein reductase] + O2 = berbamunine + oxidized [NADPH--hemoprotein reductase] + 2 H2O + H(+). It functions in the pathway alkaloid biosynthesis; berbamunine biosynthesis; berbamunine from (R)-N-methylcoclaurine and (S)-N-methylcoclaurine: step 1/1. Its function is as follows. Forms the bisbenzylisoquinoline alkaloid berbamunine by phenol oxidation of N-methylcoclaurine without the incorporation of oxygen into the product. Oxidatively couples either two molecules of (R)-N-methylcoclaurine to form the (R,R) dimer guattegaumerine or one molecule each of (R)- and (S)-N-methylcoclaurine to form the (R,S) dimer berbamunine. This Berberis stolonifera (Barberry) protein is Berbamunine synthase (CYP80A1).